The chain runs to 57 residues: DNA-directed RNA polymerase subunit Rpo6 (57 aa).

Belongs to the archaeal Rpo6/eukaryotic RPB6 RNA polymerase subunit family. As to quaternary structure, part of the RNA polymerase complex.

Its subcellular location is the cytoplasm. The enzyme catalyses RNA(n) + a ribonucleoside 5'-triphosphate = RNA(n+1) + diphosphate. In terms of biological role, DNA-dependent RNA polymerase (RNAP) catalyzes the transcription of DNA into RNA using the four ribonucleoside triphosphates as substrates. The chain is DNA-directed RNA polymerase subunit Rpo6 from Haloarcula marismortui (strain ATCC 43049 / DSM 3752 / JCM 8966 / VKM B-1809) (Halobacterium marismortui).